Reading from the N-terminus, the 137-residue chain is Small ribosomal subunit protein uS9 (137 aa).

A disordered region spans residues 100–137 (ENRPPLKSEGYLTRDPRAKERKKYGLHKARKAPQYSKR). Residues 118–137 (KERKKYGLHKARKAPQYSKR) are compositionally biased toward basic residues.

The protein belongs to the universal ribosomal protein uS9 family.

The protein is Small ribosomal subunit protein uS9 of Microcystis aeruginosa (strain NIES-843 / IAM M-2473).